Reading from the N-terminus, the 867-residue chain is Leucine--tRNA ligase (867 aa).

The short motif at 43–53 (PYPSGRLHMGH) is the 'HIGH' region element. A 'KMSKS' region motif is present at residues 627–631 (KMSKS). Lysine 630 is an ATP binding site.

It belongs to the class-I aminoacyl-tRNA synthetase family.

The protein localises to the cytoplasm. The catalysed reaction is tRNA(Leu) + L-leucine + ATP = L-leucyl-tRNA(Leu) + AMP + diphosphate. The polypeptide is Leucine--tRNA ligase (Phenylobacterium zucineum (strain HLK1)).